The chain runs to 1498 residues: DNA-directed RNA polymerase subunit beta' (1498 aa).

Positions 67, 69, 82, and 85 each coordinate Zn(2+). Residues Asp499, Asp501, and Asp503 each contribute to the Mg(2+) site. 4 residues coordinate Zn(2+): Cys867, Cys943, Cys950, and Cys953.

It belongs to the RNA polymerase beta' chain family. As to quaternary structure, the RNAP catalytic core consists of 2 alpha, 1 beta, 1 beta' and 1 omega subunit. When a sigma factor is associated with the core the holoenzyme is formed, which can initiate transcription. It depends on Mg(2+) as a cofactor. Zn(2+) is required as a cofactor.

It catalyses the reaction RNA(n) + a ribonucleoside 5'-triphosphate = RNA(n+1) + diphosphate. Its function is as follows. DNA-dependent RNA polymerase catalyzes the transcription of DNA into RNA using the four ribonucleoside triphosphates as substrates. The sequence is that of DNA-directed RNA polymerase subunit beta' from Chlorobium luteolum (strain DSM 273 / BCRC 81028 / 2530) (Pelodictyon luteolum).